The chain runs to 496 residues: L-arabinose isomerase (496 aa).

4 residues coordinate Mn(2+): Glu302, Glu329, His346, and His445.

Belongs to the arabinose isomerase family. Requires Mn(2+) as cofactor.

The enzyme catalyses beta-L-arabinopyranose = L-ribulose. The protein operates within carbohydrate degradation; L-arabinose degradation via L-ribulose; D-xylulose 5-phosphate from L-arabinose (bacterial route): step 1/3. Its function is as follows. Catalyzes the conversion of L-arabinose to L-ribulose. In Thermotoga maritima (strain ATCC 43589 / DSM 3109 / JCM 10099 / NBRC 100826 / MSB8), this protein is L-arabinose isomerase.